Here is a 355-residue protein sequence, read N- to C-terminus: Electron transfer flavoprotein subunit alpha, mitochondrial (355 aa).

Residue 295–323 coordinates FAD; sequence LYIAVGISGAIQHLAGMKDSKVIVAINKD.

It belongs to the ETF alpha-subunit/FixB family. Heterodimer of an alpha and a beta subunit. It depends on FAD as a cofactor.

The protein localises to the mitochondrion matrix. Its function is as follows. The electron transfer flavoprotein serves as a specific electron acceptor for several dehydrogenases, including five acyl-CoA dehydrogenases, glutaryl-CoA and sarcosine dehydrogenase. It transfers the electrons to the main mitochondrial respiratory chain via ETF-ubiquinone oxidoreductase (ETF dehydrogenase). In Dictyostelium discoideum (Social amoeba), this protein is Electron transfer flavoprotein subunit alpha, mitochondrial (etfa).